The sequence spans 193 residues: dTTP/UTP pyrophosphatase (193 aa).

The active-site Proton acceptor is the Asp-77.

The protein belongs to the Maf family. YhdE subfamily. The cofactor is a divalent metal cation.

It localises to the cytoplasm. It carries out the reaction dTTP + H2O = dTMP + diphosphate + H(+). It catalyses the reaction UTP + H2O = UMP + diphosphate + H(+). Its function is as follows. Nucleoside triphosphate pyrophosphatase that hydrolyzes dTTP and UTP. May have a dual role in cell division arrest and in preventing the incorporation of modified nucleotides into cellular nucleic acids. This is dTTP/UTP pyrophosphatase from Phocaeicola vulgatus (strain ATCC 8482 / DSM 1447 / JCM 5826 / CCUG 4940 / NBRC 14291 / NCTC 11154) (Bacteroides vulgatus).